The chain runs to 422 residues: Probable FBD-associated F-box protein At1g32375 (422 aa).

One can recognise an F-box domain in the interval 1-53; the sequence is MDKLSQLPEALLVRILSLLSAKDVVSTMVLSKRWQFLWMLVPKLIYDDSYQAI. The region spanning 342-392 is the FBD domain; the sequence is CWNEPSAVPECLLTSLETLEWVKYEGTEEEKEVAAFILRSGSCLKKVTISS.

This is Probable FBD-associated F-box protein At1g32375 from Arabidopsis thaliana (Mouse-ear cress).